Here is a 1037-residue protein sequence, read N- to C-terminus: Presequence protease, mitochondrial (1037 aa).

The transit peptide at 1 to 28 (MWRCGGRQGLCVLRRLSGGHAHHRAWRW) directs the protein to the mitochondrion. Zn(2+) is bound at residue His-104. Glu-107 functions as the Proton acceptor in the catalytic mechanism. Zn(2+) is bound at residue His-108. Cys-119 and Cys-556 are disulfide-bonded. The active site involves Glu-180. Glu-205 provides a ligand contact to Zn(2+). Position 759 is an N6-acetyllysine (Lys-759). Lys-770 is modified (N6-acetyllysine; alternate). Lys-770 carries the N6-succinyllysine; alternate modification. Residues 804–814 (GRSKKERRPVR) are compositionally biased toward basic residues. The tract at residues 804–834 (GRSKKERRPVRPHTVEKPVPSSSGGDAHVPH) is disordered. Lys-849 is subject to N6-succinyllysine. N6-acetyllysine is present on Lys-884. Lys-946 carries the N6-succinyllysine modification.

Belongs to the peptidase M16 family. PreP subfamily. In terms of assembly, monomer and homodimer; homodimerization is induced by binding of the substrate. It depends on Zn(2+) as a cofactor. A disulfide bond locks the enzyme in the closed conformation preventing substrate entry into the catalytic chamber. In terms of tissue distribution, widely expressed. Expressed at higher level in muscle and heart compared to brain, pancreas, liver, lung and placenta.

Its subcellular location is the mitochondrion. The protein resides in the mitochondrion matrix. With respect to regulation, mainly exists in a closed and catalytically competent conformation but a closed-to-open switch allows substrate entry into the catalytic chamber. Substrate binding induces closure and dimerization. A disulfide bond may lock the enzyme in a closed conformation preventing substrate entry into the catalytic chamber, participating in redox regulation of the enzyme. Inhibited by metal-chelating agents. Inhibited by nickel and zinc excess, and slightly activated by manganese. In terms of biological role, metalloendopeptidase of the mitochondrial matrix that functions in peptide cleavage and degradation rather than in protein processing. Has an ATP-independent activity. Specifically cleaves peptides in the range of 5 to 65 residues. Shows a preference for cleavage after small polar residues and before basic residues, but without any positional preference. Degrades the transit peptides of mitochondrial proteins after their cleavage. Also degrades other unstructured peptides. It is also able to degrade amyloid-beta protein 40, one of the peptides produced by APP processing, when it accumulates in mitochondrion. It is a highly efficient protease, at least toward amyloid-beta protein 40. Cleaves that peptide at a specific position and is probably not processive, releasing digested peptides intermediates that can be further cleaved subsequently. It is also able to degrade amyloid-beta protein 42. The polypeptide is Presequence protease, mitochondrial (Homo sapiens (Human)).